Consider the following 208-residue polypeptide: Large ribosomal subunit protein bL25 (208 aa).

A compositionally biased stretch (low complexity) spans 186–201 (PAGEKSAAAEEGAAAA). The segment at 186–208 (PAGEKSAAAEEGAAAAGEDKPAA) is disordered.

This sequence belongs to the bacterial ribosomal protein bL25 family. CTC subfamily. Part of the 50S ribosomal subunit; part of the 5S rRNA/L5/L18/L25 subcomplex. Contacts the 5S rRNA. Binds to the 5S rRNA independently of L5 and L18.

This is one of the proteins that binds to the 5S RNA in the ribosome where it forms part of the central protuberance. This chain is Large ribosomal subunit protein bL25, found in Ralstonia pickettii (strain 12J).